A 407-amino-acid polypeptide reads, in one-letter code: Putative replication protein A (407 aa).

It belongs to the ParA family.

This chain is Putative replication protein A, found in Sinorhizobium fredii (strain NBRC 101917 / NGR234).